Here is a 140-residue protein sequence, read N- to C-terminus: Pro-variola growth factor (140 aa).

A signal peptide spans 1-18 (MSMKYLMLLFAAMIIRSF). Residues 19-100 (ANSGNAIETT…SEKPNTTTSY (82 aa)) are Extracellular-facing. A glycan (N-linked (GlcNAc...) asparagine; by host) is linked at Asn-34. Positions 41 to 81 (AIRLCGPEGNGYCFHGICIHARDIDGMYCRCSHGYTGIRCQ) constitute an EGF-like domain. Disulfide bonds link Cys-45/Cys-58, Cys-53/Cys-69, and Cys-71/Cys-80. Asn-95 is a glycosylation site (N-linked (GlcNAc...) asparagine; by host). A helical transmembrane segment spans residues 101–121 (IPSPGIVLVLLVSIIMCCLLF). Residues 122-140 (VYRFTRRTNKLPLQDMVVP) lie on the Cytoplasmic side of the membrane.

This sequence belongs to the orthopoxvirus OPG019 family. Variola growth factor interacts with host EGFR and promotes EGFR dimerization.

Its subcellular location is the host membrane. The protein localises to the secreted. Functionally, stimulates cellular proliferation (hyperplasia)and mobility around infected cells to promote rapid and efficient spread of infection. This effect is beneficial for virus replication in vivo, because poxviruses replicate possibly better in proliferating cells than in quiescent cells. Acts by binding host EGFR, inducing its dimerization, autophosphorylation and leading to activation of several cellular pathways regulating cell proliferation or cell survival. The activation by host EGFR of mitogen activated protein kinases (MAPK) and extracellular-signal regulated kinases (ERK) are essential for the positive effect of vaccinia growth factor on poxvirus virulence in vivo. This is Pro-variola growth factor (OPG019) from Variola virus.